We begin with the raw amino-acid sequence, 685 residues long: UvrABC system protein C (685 aa).

Residues 15-93 (ALPGVYRYFD…IKTQNPRFNI (79 aa)) form the GIY-YIG domain. The 36-residue stretch at 214-249 (QELLQAMEARMMAYSGQLAFEQAAEVRNQMQALSRV) folds into the UVR domain. Positions 365–388 (AQGGDHAPAAQGGDPPPAASSGGH) are enriched in low complexity. The disordered stretch occupies residues 365–391 (AQGGDHAPAAQGGDPPPAASSGGHPLR).

It belongs to the UvrC family. As to quaternary structure, interacts with UvrB in an incision complex.

The protein resides in the cytoplasm. Functionally, the UvrABC repair system catalyzes the recognition and processing of DNA lesions. UvrC both incises the 5' and 3' sides of the lesion. The N-terminal half is responsible for the 3' incision and the C-terminal half is responsible for the 5' incision. The polypeptide is UvrABC system protein C (Verminephrobacter eiseniae (strain EF01-2)).